The primary structure comprises 172 residues: Small ribosomal subunit protein uS5c (172 aa).

Residues 15 to 78 (WEEKVVQVKR…TDAKKHIINV (64 aa)) form the S5 DRBM domain.

It belongs to the universal ribosomal protein uS5 family. In terms of assembly, part of the 30S ribosomal subunit. Contacts protein S4.

The protein resides in the plastid. It is found in the chloroplast. Its function is as follows. With S4 and S12 plays an important role in translational accuracy. This is Small ribosomal subunit protein uS5c (rps5) from Gracilaria tenuistipitata var. liui (Red alga).